An 89-amino-acid chain; its full sequence is Large ribosomal subunit protein bL31B (89 aa).

Belongs to the bacterial ribosomal protein bL31 family. Type B subfamily. Part of the 50S ribosomal subunit.

The polypeptide is Large ribosomal subunit protein bL31B (Corynebacterium aurimucosum (strain ATCC 700975 / DSM 44827 / CIP 107346 / CN-1) (Corynebacterium nigricans)).